We begin with the raw amino-acid sequence, 76 residues long: Lividin-2 (76 aa).

The signal sequence occupies residues 1–22 (MFTLKKSLLLLFFLGTISLSLC). A propeptide spanning residues 23–41 (QEERNADEEDGGEVTEEEV) is cleaved from the precursor. Cysteine 70 and cysteine 76 are oxidised to a cystine.

In terms of tissue distribution, expressed by the skin glands.

It is found in the secreted. Functionally, antimicrobial peptide. The protein is Lividin-2 of Odorrana livida (Green mountain frog).